The chain runs to 210 residues: Glutathione S-transferase P (210 aa).

Residues 2-81 enclose the GST N-terminal domain; the sequence is PPYTIVYFPV…HLGRSLGLYG (80 aa). The residue at position 4 (Tyr-4) is a Phosphotyrosine; by EGFR. Residues Tyr-8, Arg-14, Trp-39, Lys-45, and 52-53 each bind glutathione; that span reads QL. Residue Thr-62 is modified to Phosphothreonine. Residue 65 to 66 participates in glutathione binding; the sequence is QS. A GST C-terminal domain is found at 83 to 204; sequence DQKEAALVDM…SSPDHLNRPI (122 aa). 2 positions are modified to N6-succinyllysine: Lys-103 and Lys-116. Lys-128 is subject to N6-acetyllysine.

Belongs to the GST superfamily. Pi family. As to quaternary structure, homodimer. Interacts with CDK5. In terms of tissue distribution, present in kidney, lung, testis and placenta, very low levels in liver.

Its subcellular location is the cytoplasm. The protein resides in the mitochondrion. It localises to the nucleus. It carries out the reaction RX + glutathione = an S-substituted glutathione + a halide anion + H(+). The enzyme catalyses prostaglandin J2 + glutathione = prostaglandin J2-S-(R)-glutathione. It catalyses the reaction prostaglandin J2 + glutathione = prostaglandin J2-S-(S)-glutathione. The catalysed reaction is prostaglandin A2 + glutathione = prostaglandin A2-S-(S)-glutathione. It carries out the reaction 11(S)-hydroxy-14(S),15(S)-epoxy-(5Z,8Z,12E)-eicosatrienoate + glutathione = (11S,15S)-dihydroxy-14(R)-S-glutathionyl-(5Z,8Z,12E)-eicosatrienoate. Functionally, conjugation of reduced glutathione to a wide number of exogenous and endogenous hydrophobic electrophiles. Involved in the formation of glutathione conjugates of both prostaglandin A2 (PGA2) and prostaglandin J2 (PGJ2). Participates in the formation of novel hepoxilin regioisomers. Negatively regulates CDK5 activity via p25/p35 translocation to prevent neurodegeneration. In Rattus norvegicus (Rat), this protein is Glutathione S-transferase P.